The primary structure comprises 236 residues: Eukaryotic translation initiation factor 3 subunit J (236 aa).

The disordered stretch occupies residues 20–88 (ANNINKWEGE…AEEEKRLANL (69 aa)). Over residues 28 to 46 (GEDDDEDVKESWEDEEEKK) the composition is skewed to acidic residues. 2 stretches are compositionally biased toward basic and acidic residues: residues 47-58 (DEEKPTKTEVPV) and 68-88 (AKLE…LANL).

This sequence belongs to the eIF-3 subunit J family. In terms of assembly, component of the eukaryotic translation initiation factor 3 (eIF-3) complex. The eIF-3 complex interacts with pix.

It localises to the cytoplasm. In terms of biological role, component of the eukaryotic translation initiation factor 3 (eIF-3) complex, which is involved in protein synthesis of a specialized repertoire of mRNAs and, together with other initiation factors, stimulates binding of mRNA and methionyl-tRNAi to the 40S ribosome. The eIF-3 complex specifically targets and initiates translation of a subset of mRNAs involved in cell proliferation. The sequence is that of Eukaryotic translation initiation factor 3 subunit J from Drosophila willistoni (Fruit fly).